The sequence spans 195 residues: Pyridoxal 5'-phosphate synthase subunit PdxT (195 aa).

Residue 49 to 51 coordinates L-glutamine; that stretch reads GES. The active-site Nucleophile is the Cys-81. L-glutamine-binding positions include Arg-113 and 141-142; that span reads IR. Active-site charge relay system residues include His-177 and Glu-179.

It belongs to the glutaminase PdxT/SNO family. As to quaternary structure, in the presence of PdxS, forms a dodecamer of heterodimers. Only shows activity in the heterodimer.

The catalysed reaction is aldehydo-D-ribose 5-phosphate + D-glyceraldehyde 3-phosphate + L-glutamine = pyridoxal 5'-phosphate + L-glutamate + phosphate + 3 H2O + H(+). The enzyme catalyses L-glutamine + H2O = L-glutamate + NH4(+). The protein operates within cofactor biosynthesis; pyridoxal 5'-phosphate biosynthesis. Functionally, catalyzes the hydrolysis of glutamine to glutamate and ammonia as part of the biosynthesis of pyridoxal 5'-phosphate. The resulting ammonia molecule is channeled to the active site of PdxS. This chain is Pyridoxal 5'-phosphate synthase subunit PdxT, found in Mycolicibacterium vanbaalenii (strain DSM 7251 / JCM 13017 / BCRC 16820 / KCTC 9966 / NRRL B-24157 / PYR-1) (Mycobacterium vanbaalenii).